The sequence spans 79 residues: RNA-binding protein Hfq (79 aa).

The Sm domain occupies 10–70; it reads DVFLNTVRKQ…ISTIMPGQPV (61 aa).

It belongs to the Hfq family. In terms of assembly, homohexamer.

Functionally, RNA chaperone that binds small regulatory RNA (sRNAs) and mRNAs to facilitate mRNA translational regulation in response to envelope stress, environmental stress and changes in metabolite concentrations. Also binds with high specificity to tRNAs. This chain is RNA-binding protein Hfq, found in Bartonella henselae (strain ATCC 49882 / DSM 28221 / CCUG 30454 / Houston 1) (Rochalimaea henselae).